The following is a 122-amino-acid chain: SLIELGKMIFQETGKNPVKNYGLYLCNCGVGNRGKPVDATDRCCFVHKCCYKKVTGCDPKKDRYSYSWENKAIVCGEKNPPCLKQVCECDKAVAICLRENLQTYDKKHRVTVKFLCKAPESC.

Intrachain disulfides connect Cys-26/Cys-116, Cys-28/Cys-44, Cys-43/Cys-96, Cys-49/Cys-122, Cys-50/Cys-89, Cys-57/Cys-82, and Cys-75/Cys-87. Positions 106-117 (KKHRVTVKFLCK) are important for membrane-damaging activities in eukaryotes and bacteria; heparin-binding.

Belongs to the phospholipase A2 family. Group II subfamily. K49 sub-subfamily. As to quaternary structure, homodimer; non-covalently linked. In terms of tissue distribution, expressed by the venom gland.

It is found in the secreted. Its function is as follows. Snake venom phospholipase A2 (PLA2) that has almost no phospholipase A2 activity. Is myotoxic. Displays edema-inducing activities. A model of myotoxic mechanism has been proposed: an apo Lys49-PLA2 is activated by the entrance of a hydrophobic molecule (e.g. fatty acid) at the hydrophobic channel of the protein leading to a reorientation of a monomer. This reorientation causes a transition between 'inactive' to 'active' states, causing alignment of C-terminal and membrane-docking sites (MDoS) side-by-side and putting the membrane-disruption sites (MDiS) in the same plane, exposed to solvent and in a symmetric position for both monomers. The MDoS region stabilizes the toxin on membrane by the interaction of charged residues with phospholipid head groups. Subsequently, the MDiS region destabilizes the membrane with penetration of hydrophobic residues. This insertion causes a disorganization of the membrane, allowing an uncontrolled influx of ions (i.e. calcium and sodium), and eventually triggering irreversible intracellular alterations and cell death. This is Basic phospholipase A2 homolog from Protobothrops mucrosquamatus (Taiwan habu).